The following is a 140-amino-acid chain: Large ribosomal subunit protein uL3 (140 aa).

The protein belongs to the universal ribosomal protein uL3 family. As to quaternary structure, part of the 50S ribosomal subunit. Forms a cluster with proteins L14 and L19.

One of the primary rRNA binding proteins, it binds directly near the 3'-end of the 23S rRNA, where it nucleates assembly of the 50S subunit. This Planobispora rosea protein is Large ribosomal subunit protein uL3 (rplC).